The primary structure comprises 301 residues: GTPase Era (301 aa).

The region spanning 7–175 (YCGFIAIVGR…AGIVRKHLPE (169 aa)) is the Era-type G domain. Residues 15-22 (GRPNVGKS) form a G1 region. Position 15 to 22 (15 to 22 (GRPNVGKS)) interacts with GTP. Residues 41 to 45 (QTTRH) are G2. Residues 62–65 (DTPG) form a G3 region. GTP contacts are provided by residues 62–66 (DTPGL) and 124–127 (NKVD). The G4 stretch occupies residues 124 to 127 (NKVD). The segment at 154 to 156 (ISA) is G5. A KH type-2 domain is found at 206–283 (LGAELPYSVT…HLELWVKVKS (78 aa)).

The protein belongs to the TRAFAC class TrmE-Era-EngA-EngB-Septin-like GTPase superfamily. Era GTPase family. In terms of assembly, monomer.

The protein localises to the cytoplasm. The protein resides in the cell inner membrane. An essential GTPase that binds both GDP and GTP, with rapid nucleotide exchange. Plays a role in 16S rRNA processing and 30S ribosomal subunit biogenesis and possibly also in cell cycle regulation and energy metabolism. The sequence is that of GTPase Era from Salmonella paratyphi B (strain ATCC BAA-1250 / SPB7).